The sequence spans 379 residues: Guanine nucleotide-binding protein G(s) subunit alpha (379 aa).

Residues 1-25 (MGCLGNSKTEDQRNEEKVQRETNKK) form a disordered region. Gly-2 carries N-palmitoyl glycine lipidation. Cys-3 carries the S-palmitoyl cysteine lipid modification. Over residues 8 to 25 (KTEDQRNEEKVQRETNKK) the composition is skewed to basic and acidic residues. In terms of domain architecture, G-alpha spans 39–379 (ATHRLLLLGA…RMHLRQYELL (341 aa)). The tract at residues 42 to 55 (RLLLLGAGESGKSS) is G1 motif. GTP contacts are provided by residues 47–55 (GAGESGKSS), 182–189 (LLRCRVLT), 208–212 (DVGGQ), 277–280 (NKQD), and Ala-351. Mg(2+) contacts are provided by Ser-54 and Thr-189. Positions 181–189 (DLLRCRVLT) are G2 motif. The G3 motif stretch occupies residues 204–213 (FHMFDVGGQR). Positions 273-280 (ILFLNKQD) are G4 motif. The interval 349–354 (TCAVDT) is G5 motif.

The protein belongs to the G-alpha family. G(s) subfamily. As to quaternary structure, heterotrimeric G proteins are composed of 3 units; alpha, beta and gamma. The alpha chain contains the guanine nucleotide binding site.

Its subcellular location is the cell membrane. Its function is as follows. Guanine nucleotide-binding proteins (G proteins) function as transducers in numerous signaling pathways controlled by G protein-coupled receptors (GPCRs). Signaling involves the activation of adenylyl cyclases, resulting in increased levels of the signaling molecule cAMP. GNAS functions downstream of several GPCRs, including beta-adrenergic receptors. Stimulates the Ras signaling pathway. The chain is Guanine nucleotide-binding protein G(s) subunit alpha (gnas) from Xenopus laevis (African clawed frog).